The primary structure comprises 427 residues: ATP synthase subunit beta (427 aa).

An ATP-binding site is contributed by 160–167 (GGAGVGKT).

It belongs to the ATPase alpha/beta chains family. F-type ATPases have 2 components, CF(1) - the catalytic core - and CF(0) - the membrane proton channel. CF(1) has five subunits: alpha(3), beta(3), gamma(1), delta(1), epsilon(1). CF(0) has three main subunits: a(1), b(2) and c(9-12). The alpha and beta chains form an alternating ring which encloses part of the gamma chain. CF(1) is attached to CF(0) by a central stalk formed by the gamma and epsilon chains, while a peripheral stalk is formed by the delta and b chains.

It is found in the cell membrane. It carries out the reaction ATP + H2O + 4 H(+)(in) = ADP + phosphate + 5 H(+)(out). In terms of biological role, produces ATP from ADP in the presence of a proton gradient across the membrane. The catalytic sites are hosted primarily by the beta subunits. In Peptococcus niger, this protein is ATP synthase subunit beta.